The following is a 584-amino-acid chain: Cation channel sperm-associated protein 2 (584 aa).

The Cytoplasmic segment spans residues Met1–Ser106. The helical transmembrane segment at Ile107–Leu129 threads the bilayer. Over Met130–Trp138 the chain is Extracellular. The helical transmembrane segment at Pro139 to Leu164 threads the bilayer. Residues Ala165–Asn173 are Cytoplasmic-facing. Residues Ala174 to Ser198 traverse the membrane as a helical segment. Residues Ala199 to Ser201 lie on the Extracellular side of the membrane. Residues Val202–Ala220 traverse the membrane as a helical segment. At Arg221 to Lys237 the chain is on the cytoplasmic side. A helical membrane pass occupies residues Ser238–Phe260. The Extracellular portion of the chain corresponds to Phe261–Ser279. Positions Asp280–Phe292 form an intramembrane region, helical; Pore-forming. Over Thr293–Arg312 the chain is Extracellular. Residues Val313 to Val339 traverse the membrane as a helical segment. Over Thr340–Lys584 the chain is Cytoplasmic. Residues Ser376–Lys386 are compositionally biased toward polar residues. Disordered stretches follow at residues Ser376–Thr460 and Ala480–Ala510. Acidic residues-rich tracts occupy residues Asp390–Ser418 and Glu426–Ser443. Basic and acidic residues-rich tracts occupy residues Asp444–Thr460 and Ala483–Ala496.

It belongs to the cation channel sperm-associated (TC 1.A.1.19) family. As to quaternary structure, component of the CatSper complex or CatSpermasome composed of the core pore-forming members CATSPER1, CATSPER2, CATSPER3 and CATSPER4 as well as auxiliary members CATSPERB, CATSPERG, CATSPERD, CATSPERE, CATSPERZ, C2CD6/CATSPERT, SLCO6C1, TMEM249, TMEM262 and EFCAB9. HSPA1 may be an additional auxiliary complex member. The core complex members CATSPER1, CATSPER2, CATSPER3 and CATSPER4 form a heterotetrameric channel. The auxiliary CATSPERB, CATSPERG, CATSPERD and CATSPERE subunits form a pavilion-like structure over the pore which stabilizes the complex through interactions with CATSPER4, CATSPER3, CATSPER1 and CATSPER2 respectively. SLCO6C1 interacts with CATSPERE and TMEM262/CATSPERH interacts with CATSPERB, further stabilizing the complex. C2CD6/CATSPERT interacts at least with CATSPERD and is required for targeting the CatSper complex in the flagellar membrane. Interacts with Ca(v)3.3/CACNA1I, leading to suppression of T-type calcium channel activity.

The protein resides in the cell projection. Its subcellular location is the cilium. The protein localises to the flagellum membrane. The catalysed reaction is Ca(2+)(in) = Ca(2+)(out). Activated by intracellular alkalinization. Functionally, pore-forming subunit of the CatSper complex, a sperm-specific voltage-gated calcium channel that plays a central role in sperm cell hyperactivation. Controls calcium entry to mediate the hyperactivated motility, a step needed for sperm motility which is essential late in the preparation of sperm for fertilization. The sequence is that of Cation channel sperm-associated protein 2 (Catsper2) from Rattus norvegicus (Rat).